Consider the following 406-residue polypeptide: Peptidase T (406 aa).

Position 82 (histidine 82) interacts with Zn(2+). Residue aspartate 84 is part of the active site. Zn(2+) is bound at residue aspartate 142. Glutamate 176 acts as the Proton acceptor in catalysis. Residues glutamate 177, aspartate 199, and histidine 381 each coordinate Zn(2+).

The protein belongs to the peptidase M20B family. Requires Zn(2+) as cofactor.

Its subcellular location is the cytoplasm. It catalyses the reaction Release of the N-terminal residue from a tripeptide.. In terms of biological role, cleaves the N-terminal amino acid of tripeptides. The chain is Peptidase T from Streptococcus agalactiae serotype V (strain ATCC BAA-611 / 2603 V/R).